The following is a 259-amino-acid chain: 12alpha-hydroxysteroid dehydrogenase (259 aa).

The active-site Proton acceptor is Tyr162.

The protein belongs to the short-chain dehydrogenases/reductases (SDR) family. Homotetramer.

It catalyses the reaction cholate + NADP(+) = 3alpha,7alpha-dihydroxy-12-oxo-5beta-cholanate + NADPH + H(+). The enzyme catalyses deoxycholate + NADP(+) = 12-dehydrodeoxycholate + NADPH + H(+). Functionally, catalyzes the oxidation of the 12alpha-hydroxy group of bile acids, like cholate and deoxycholate. Is also able to catalyze the reverse reaction in vitro. Is likely involved in an epimerization pathway of bile acids that converts hydroxy groups from alpha to beta positions via stable oxo-intermediates, which occurs in the human gut. This is 12alpha-hydroxysteroid dehydrogenase from Clostridium sp. (strain ATCC 29733 / VPI C48-50).